A 701-amino-acid polypeptide reads, in one-letter code: Elongation factor G (701 aa).

One can recognise a tr-type G domain in the interval 11-287 (NKVRNIGIMA…AVVDYLPSPL (277 aa)). Residues 20-27 (AHIDAGKT), 84-88 (DTPGH), and 138-141 (NKMD) each bind GTP.

The protein belongs to the TRAFAC class translation factor GTPase superfamily. Classic translation factor GTPase family. EF-G/EF-2 subfamily.

It localises to the cytoplasm. Functionally, catalyzes the GTP-dependent ribosomal translocation step during translation elongation. During this step, the ribosome changes from the pre-translocational (PRE) to the post-translocational (POST) state as the newly formed A-site-bound peptidyl-tRNA and P-site-bound deacylated tRNA move to the P and E sites, respectively. Catalyzes the coordinated movement of the two tRNA molecules, the mRNA and conformational changes in the ribosome. The sequence is that of Elongation factor G from Mycobacterium sp. (strain JLS).